We begin with the raw amino-acid sequence, 151 residues long: MQDLYQLIGEKLNDIIPGEWTKIYLYAEVLDDSTMVLFHFRTPENNQIIYSQDIPSHYNVSKDIFKTLLRELRELFEELRTEHRNNNDDVWTNLTLTLDRSGEFQLDYNYDDILASELDGYERIAIWEYKNLGILPEDEDDKEFVISYLGL.

Positions 62–90 (KDIFKTLLRELRELFEELRTEHRNNNDDV) form a coiled coil.

Interacts with cognate toxin YeeF but not with non-cognate toxin YobL. The interaction probably inhibits the toxic activity of YeeF. May bind with a stoichiometry of 2:2 to YeeF.

It is found in the cytoplasm. In terms of biological role, immunity component of one of 6 LXG toxin-immunity modules in this strain. They promote kin selection, mediate competition in biofilms, and drive spatial segregation of different strains, indicating that LXG toxins may help avoid warfare between strains in biofilms. Mediates intercellular competition during biofilm formation; disruption of the operon disadvantages the bacteria, but overexpression of the cognate immunity protein restores growth in competition with wild-type. In situ neutralizes the toxic effect of cognate toxin YeeF. Probably neutralizes the ability to inhibit growth of cognate toxin YeeF. Probably does not have immunity protein activity on other LXG toxins. The protein is Immunity protein YezG (yezG) of Bacillus subtilis (strain 168).